The chain runs to 826 residues: Dolichyl-diphosphooligosaccharide--protein glycosyltransferase subunit STT3B (826 aa).

Residues methionine 1–glycine 60 are disordered. Residue alanine 2 is modified to N-acetylalanine. The Cytoplasmic portion of the chain corresponds to alanine 2–alanine 41. 3 positions are modified to phosphoserine: serine 13, serine 18, and serine 29. A helical membrane pass occupies residues histidine 42 to serine 86. At serine 87 to leucine 173 the chain is on the lumenal side. The short motif at glutamate 101–aspartate 103 is the DXD motif 1 element. Aspartate 103 is a Mn(2+) binding site. A helical transmembrane segment spans residues alanine 174–leucine 192. Residues tryptophan 193–asparagine 194 lie on the Cytoplasmic side of the membrane. The chain crosses the membrane as a helical span at residues glutamine 195 to isoleucine 212. Residues serine 213 to glutamate 223 are Lumenal-facing. Aspartate 221 and glutamate 223 together coordinate Mn(2+). The short motif at aspartate 221–glutamate 223 is the DXD motif 2 element. A helical membrane pass occupies residues glycine 224–threonine 243. Over glycine 244–serine 245 the chain is Cytoplasmic. Residues valine 246–valine 260 traverse the membrane as a helical segment. Residues serine 261–glycine 265 lie on the Lumenal side of the membrane. A helical membrane pass occupies residues tyrosine 266–leucine 282. Over methionine 283–serine 287 the chain is Cytoplasmic. A helical membrane pass occupies residues lysine 288–phenylalanine 313. Topologically, residues glutamine 314 to histidine 321 are lumenal. The chain crosses the membrane as a helical span at residues methionine 322–arginine 341. Over aspartate 342–glutamine 350 the chain is Cytoplasmic. The chain crosses the membrane as a helical span at residues threonine 351–leucine 371. The Lumenal segment spans residues threonine 372 to threonine 410. The short motif at serine 402–glutamate 405 is the SVSE motif element. Residues tryptophan 411–isoleucine 433 traverse the membrane as a helical segment. Residues lysine 434–glutamate 439 lie on the Cytoplasmic side of the membrane. Residues arginine 440 to valine 456 traverse the membrane as a helical segment. Residues methionine 457–leucine 460 are Lumenal-facing. Arginine 459 is a dolichyl diphosphooligosaccharide binding site. A helical membrane pass occupies residues methionine 461–histidine 482. At tyrosine 483 to lysine 526 the chain is on the cytoplasmic side. Residues arginine 490–aspartate 512 are disordered. A phosphoserine mark is found at serine 498 and serine 499. Residues threonine 527–valine 552 traverse the membrane as a helical segment. The Lumenal segment spans residues histidine 553 to valine 826. The interacts with target acceptor peptide in protein substrate stretch occupies residues tryptophan 604–aspartate 606. A WWDYG motif motif is present at residues tryptophan 604 to glycine 608. A dolichyl diphosphooligosaccharide-binding site is contributed by tyrosine 609. N-linked (GlcNAc...) asparagine glycosylation is found at asparagine 616 and asparagine 623. Residue asparagine 627 is glycosylated (N-linked (GlcNAc...) (high mannose) asparagine). An N-linked (GlcNAc...) asparagine glycan is attached at asparagine 641. Residues aspartate 671–methionine 678 carry the DK motif motif.

Belongs to the STT3 family. As to quaternary structure, component of the oligosaccharyltransferase (OST) complex. There are 2 OST complexes, OST-A and OST-B, which contain STT3A or STT3B as catalytic subunit, respectively. OST-A and OST-B contain common core subunits RPN1, RPN2, OST48, OST4, DAD1 and TMEM258, and OST-B contains either MAGT1 or TUSC3 as specific accessory subunit. Requires Mg(2+) as cofactor. The cofactor is Mn(2+).

The protein localises to the endoplasmic reticulum. Its subcellular location is the endoplasmic reticulum membrane. The catalysed reaction is a di-trans,poly-cis-dolichyl diphosphooligosaccharide + L-asparaginyl-[protein] = N(4)-(oligosaccharide-(1-&gt;4)-N-acetyl-beta-D-glucosaminyl-(1-&gt;4)-N-acetyl-beta-D-glucosaminyl)-L-asparaginyl-[protein] + a di-trans,poly-cis-dolichyl diphosphate + H(+). The protein operates within protein modification; protein glycosylation. Catalytic subunit of the oligosaccharyl transferase (OST) complex that catalyzes the initial transfer of a defined glycan (Glc(3)Man(9)GlcNAc(2) in eukaryotes) from the lipid carrier dolichol-pyrophosphate to an asparagine residue within an Asn-X-Ser/Thr consensus motif in nascent polypeptide chains, the first step in protein N-glycosylation. N-glycosylation occurs cotranslationally and the complex associates with the Sec61 complex at the channel-forming translocon complex that mediates protein translocation across the endoplasmic reticulum (ER). All subunits are required for a maximal enzyme activity. This subunit contains the active site and the acceptor peptide and donor lipid-linked oligosaccharide (LLO) binding pockets. STT3B is present in a small subset of OST complexes and mediates both cotranslational and post-translational N-glycosylation of target proteins: STT3B-containing complexes are required for efficient post-translational glycosylation and while they are less competent than STT3A-containing complexes for cotranslational glycosylation, they have the ability to mediate glycosylation of some nascent sites that are not accessible for STT3A. STT3B-containing complexes also act post-translationally and mediate modification of skipped glycosylation sites in unfolded proteins. Plays a role in ER-associated degradation (ERAD) pathway that mediates ubiquitin-dependent degradation of misfolded endoplasmic reticulum proteins by mediating N-glycosylation of unfolded proteins, which are then recognized by the ERAD pathway and targeted for degradation. The sequence is that of Dolichyl-diphosphooligosaccharide--protein glycosyltransferase subunit STT3B from Canis lupus familiaris (Dog).